Here is an 892-residue protein sequence, read N- to C-terminus: Microsomal triglyceride transfer protein homolog (892 aa).

The N-terminal stretch at 1 to 19 (MFSSRIWLLLAVTVGVCLA) is a signal peptide.

In terms of assembly, heterodimer; heterodimerizes with protein disulfide isomerase.

It is found in the endoplasmic reticulum. Its function is as follows. Catalyzes the transport of cholesteryl ester, and phospholipid between phospholipid surfaces. Does not catalyze transport of triglycerides. Required for the assembly and secretion of plasma lipoproteins that contain apolipoprotein B. Required for normal expression of klf-3. This chain is Microsomal triglyceride transfer protein homolog, found in Caenorhabditis elegans.